A 338-amino-acid polypeptide reads, in one-letter code: MIRVAINGYGRIGRSILRALYESGKRQQMQIVAINELAKPEAIIHLTQYDTTHGRFAHKVKLVDDHMLIGDDAIKILHEPDPTKLPWHEMDIDIVYEATGVLLDRQSCEAHIHAGAKQVLISHPSSADVDGTIVYGVNHDLLRAEHTVVSNASCTTNCIVPVIDVLDRHFGVKSGAITTIHSAMNDQQVIDAYHDDLRRTRAAGQSIIPVDTKLARGIERILPHMKDKFEAISVRVPTINVTAIDLSVTLEKTVDIATVNHVLESAANGRFNGILGYTDEPLVSCDFNHDPRSSIVDGTQTRVSAGQLVKLLLWCDNEWGFANRMLDTSLAMIAAKRG.

An NAD(+)-binding site is contributed by Arg11 to Ile12. Residues Ser153–Thr155, Arg199, Thr212–Lys213, and Arg235 contribute to the substrate site. Residue Cys154 is the Nucleophile of the active site. Asn317 serves as a coordination point for NAD(+).

It belongs to the glyceraldehyde-3-phosphate dehydrogenase family. Epd subfamily. As to quaternary structure, homotetramer.

It localises to the cytoplasm. It carries out the reaction D-erythrose 4-phosphate + NAD(+) + H2O = 4-phospho-D-erythronate + NADH + 2 H(+). The protein operates within cofactor biosynthesis; pyridoxine 5'-phosphate biosynthesis; pyridoxine 5'-phosphate from D-erythrose 4-phosphate: step 1/5. In terms of biological role, catalyzes the NAD-dependent conversion of D-erythrose 4-phosphate to 4-phosphoerythronate. This is D-erythrose-4-phosphate dehydrogenase from Shewanella baltica (strain OS223).